The following is a 520-amino-acid chain: GMP synthase [glutamine-hydrolyzing] (520 aa).

Positions 9-202 constitute a Glutamine amidotransferase type-1 domain; that stretch reads TILIIDFGSQ…VHRIVGVKPG (194 aa). C86 functions as the Nucleophile in the catalytic mechanism. Catalysis depends on residues H176 and E178. The region spanning 203–395 is the GMPS ATP-PPase domain; sequence WTMGAYREQA…LGLPDSFIGR (193 aa). ATP is bound at residue 230 to 236; that stretch reads SGGVDSS.

As to quaternary structure, homodimer.

The enzyme catalyses XMP + L-glutamine + ATP + H2O = GMP + L-glutamate + AMP + diphosphate + 2 H(+). It functions in the pathway purine metabolism; GMP biosynthesis; GMP from XMP (L-Gln route): step 1/1. Catalyzes the synthesis of GMP from XMP. This is GMP synthase [glutamine-hydrolyzing] from Brucella melitensis biotype 2 (strain ATCC 23457).